Here is a 566-residue protein sequence, read N- to C-terminus: Putative ABC transporter ATP-binding protein BT9727_2424 (566 aa).

2 ABC transporter domains span residues 5–246 (ISFE…GLRE) and 300–533 (LKVE…ANLK). ATP is bound by residues 39–46 (GRSGSGKS) and 333–340 (GHNGAGKS).

This sequence belongs to the ABC transporter superfamily.

It localises to the cell membrane. Probably part of an ABC transporter complex. Responsible for energy coupling to the transport system. In Bacillus thuringiensis subsp. konkukian (strain 97-27), this protein is Putative ABC transporter ATP-binding protein BT9727_2424.